Reading from the N-terminus, the 87-residue chain is U14-lycotoxin-Ls1b (87 aa).

The N-terminal stretch at 1 to 20 (MNSKVFVVLLLLALSTCVLS) is a signal peptide. Positions 21 to 66 (EKYCPTPRNTSCKKMNIRNNCCRDSDCTSNAFCCAEPCGNFCHKAS) constitute a WAP domain. 5 disulfides stabilise this stretch: Cys24–Cys54, Cys32–Cys58, Cys41–Cys53, Cys42–Cys80, and Cys47–Cys62.

This sequence belongs to the venom protein 11 family. 01 (wap-1) subfamily. In terms of processing, contains 5 disulfide bonds. Expressed by the venom gland.

It is found in the secreted. Has antibacterial activity. This is U14-lycotoxin-Ls1b from Lycosa singoriensis (Wolf spider).